Reading from the N-terminus, the 152-residue chain is SsrA-binding protein (152 aa).

The protein belongs to the SmpB family.

Its subcellular location is the cytoplasm. Functionally, required for rescue of stalled ribosomes mediated by trans-translation. Binds to transfer-messenger RNA (tmRNA), required for stable association of tmRNA with ribosomes. tmRNA and SmpB together mimic tRNA shape, replacing the anticodon stem-loop with SmpB. tmRNA is encoded by the ssrA gene; the 2 termini fold to resemble tRNA(Ala) and it encodes a 'tag peptide', a short internal open reading frame. During trans-translation Ala-aminoacylated tmRNA acts like a tRNA, entering the A-site of stalled ribosomes, displacing the stalled mRNA. The ribosome then switches to translate the ORF on the tmRNA; the nascent peptide is terminated with the 'tag peptide' encoded by the tmRNA and targeted for degradation. The ribosome is freed to recommence translation, which seems to be the essential function of trans-translation. This Rickettsia montanensis protein is SsrA-binding protein.